The following is a 122-amino-acid chain: Phosphoribosyl-ATP pyrophosphatase (122 aa).

It belongs to the PRA-PH family.

The protein resides in the cytoplasm. It catalyses the reaction 1-(5-phospho-beta-D-ribosyl)-ATP + H2O = 1-(5-phospho-beta-D-ribosyl)-5'-AMP + diphosphate + H(+). It participates in amino-acid biosynthesis; L-histidine biosynthesis; L-histidine from 5-phospho-alpha-D-ribose 1-diphosphate: step 2/9. This chain is Phosphoribosyl-ATP pyrophosphatase, found in Burkholderia thailandensis (strain ATCC 700388 / DSM 13276 / CCUG 48851 / CIP 106301 / E264).